The sequence spans 339 residues: 1-aminocyclopropane-1-carboxylate deaminase (339 aa).

The residue at position 52 (K52) is an N6-(pyridoxal phosphate)lysine. S79 functions as the Nucleophile in the catalytic mechanism.

The protein belongs to the ACC deaminase/D-cysteine desulfhydrase family. Homotrimer. Pyridoxal 5'-phosphate serves as cofactor.

The enzyme catalyses 1-aminocyclopropane-1-carboxylate + H2O = 2-oxobutanoate + NH4(+). In terms of biological role, catalyzes a cyclopropane ring-opening reaction, the irreversible conversion of 1-aminocyclopropane-1-carboxylate (ACC) to ammonia and alpha-ketobutyrate. Allows growth on ACC as a nitrogen source. In Rhizobium leguminosarum bv. viciae, this protein is 1-aminocyclopropane-1-carboxylate deaminase.